Reading from the N-terminus, the 492-residue chain is Cholesteryl ester transfer protein (492 aa).

The N-terminal stretch at 1–17 is a signal peptide; it reads MLAVTLLSLALLGSTCA. Residues Cys-160 and Cys-201 are joined by a disulfide bond. N-linked (GlcNAc...) asparagine glycosylation is present at Asn-257.

It belongs to the BPI/LBP/Plunc superfamily. BPI/LBP family.

It is found in the secreted. The catalysed reaction is cholesteryl (9Z-octadecenoate)(in) = cholesteryl (9Z-octadecenoate)(out). It catalyses the reaction 1,2,3-tri-(9Z-octadecenoyl)-glycerol(in) = 1,2,3-tri-(9Z-octadecenoyl)-glycerol(out). The enzyme catalyses cholesteryl (9Z,12Z)-octadecadienoate(in) = cholesteryl (9Z,12Z)-octadecadienoate(out). Involved in the transfer of neutral lipids, including cholesteryl ester and triglyceride, among lipoprotein particles. Allows the net movement of cholesteryl ester from high density lipoproteins/HDL to triglyceride-rich very low density lipoproteins/VLDL, and the equimolar transport of triglyceride from VLDL to HDL. Regulates the reverse cholesterol transport, by which excess cholesterol is removed from peripheral tissues and returned to the liver for elimination. The polypeptide is Cholesteryl ester transfer protein (Cricetulus griseus (Chinese hamster)).